The following is a 119-amino-acid chain: Large ribosomal subunit protein bL19 (119 aa).

The protein belongs to the bacterial ribosomal protein bL19 family.

This protein is located at the 30S-50S ribosomal subunit interface and may play a role in the structure and function of the aminoacyl-tRNA binding site. This is Large ribosomal subunit protein bL19 (rplS) from Mycoplasma pneumoniae (strain ATCC 29342 / M129 / Subtype 1) (Mycoplasmoides pneumoniae).